The primary structure comprises 107 residues: Thioredoxin (107 aa).

Positions S2 to A107 constitute a Thioredoxin domain. Active-site nucleophile residues include C34 and C37. An intrachain disulfide couples C34 to C37.

It belongs to the thioredoxin family.

Its function is as follows. Participates in various redox reactions through the reversible oxidation of its active center dithiol to a disulfide and catalyzes dithiol-disulfide exchange reactions. This chain is Thioredoxin (TRX), found in Echinococcus granulosus (Hydatid tapeworm).